A 508-amino-acid polypeptide reads, in one-letter code: Maturase K (508 aa).

Belongs to the intron maturase 2 family. MatK subfamily.

The protein localises to the plastid. The protein resides in the chloroplast. Its function is as follows. Usually encoded in the trnK tRNA gene intron. Probably assists in splicing its own and other chloroplast group II introns. The sequence is that of Maturase K from Ranunculus trichophyllus (Whitewater crowfoot).